The primary structure comprises 699 residues: MGINVSRTADLGSNQWLQRFVGRQHIAHDDEAFWNGLLNYNIVLPENSQDQLNLDSRLEALCQSFIGNNLKTGNFGSLVTVFLEKTSELLSLSDQESNMHVWQTFNALFIIRSLVKYINETGSEFQLLQHFEAMPNAELLQAALEQQQQTPAESATIAMEATEQSAAAAVPVIVDGSKFETFIDALVNLIVVIPVKEFTYHLHLEAVNMLITLLSVHLFAQQPTDKSIVFRTVFKCQHANVLMSALLHFVARIVEVPHTMFGSSSAGSFVFGIAESLLSIFTFRKQPDILKAGQAAGGGELSQRFRTHYPLANQSLLLILILTNHCTAQDNAYRTSLFSCADSKDSPKQGAVSFQIDFSAVYETLCTIVTIDQATLLLYLLLHRNERFYRFVMQQQDLEQLVIPILQTLYNAPDSNSHHIYMSLIVLLILSEDEGFNKNVHTIMLKNITWYTERTISEISLGGILILIVIRTIQYNMLKMRDKYLHTNCLAALANMSGHFRALHPYVAQRLVSLFETLARKHTRLDAQLKEPADSAVFVNVSTTPEDMLQDLSVLEEVLRMVLEILNSCLTNQLVYCPNLVYTLLYKRSVFEGFRSHHAFQDVIQNIDMVVGFFSSRLQRVQEQRGELGVNEVLEVISKGASQWSSDRLRKFPDLKFKYVEEDAPEEFFIPYVWTLVCKYGCVHFSSESIKSVTTDIAC.

G2 carries N-myristoyl glycine lipidation. Phosphoserine is present on S346.

The protein belongs to the dymeclin family.

The chain is Dymeclin from Drosophila melanogaster (Fruit fly).